Consider the following 272-residue polypeptide: 3-methyl-2-oxobutanoate hydroxymethyltransferase (272 aa).

Positions 51 and 90 each coordinate Mg(2+). 3-methyl-2-oxobutanoate is bound by residues 51-52 (DS), Asp90, and Lys118. Residue Glu120 participates in Mg(2+) binding. The active-site Proton acceptor is the Glu187.

It belongs to the PanB family. Homodecamer; pentamer of dimers. Requires Mg(2+) as cofactor.

The protein resides in the cytoplasm. It carries out the reaction 3-methyl-2-oxobutanoate + (6R)-5,10-methylene-5,6,7,8-tetrahydrofolate + H2O = 2-dehydropantoate + (6S)-5,6,7,8-tetrahydrofolate. The protein operates within cofactor biosynthesis; (R)-pantothenate biosynthesis; (R)-pantoate from 3-methyl-2-oxobutanoate: step 1/2. Its function is as follows. Catalyzes the reversible reaction in which hydroxymethyl group from 5,10-methylenetetrahydrofolate is transferred onto alpha-ketoisovalerate to form ketopantoate. This is 3-methyl-2-oxobutanoate hydroxymethyltransferase from Xylella fastidiosa (strain 9a5c).